A 350-amino-acid chain; its full sequence is ATPase GET3 (350 aa).

Residue 26-33 (KGGVGKTT) participates in ATP binding. Asp-57 is a catalytic residue. ATP-binding residues include Glu-243 and Asn-270. Residues Cys-282 and Cys-285 each contribute to the Zn(2+) site.

Belongs to the arsA ATPase family. In terms of assembly, homodimer. Component of the Golgi to ER traffic (GET) complex, which is composed of GET1, GET2 and GET3. Within the complex, GET1 and GET2 form a heterotetramer which is stabilized by phosphatidylinositol binding and which binds to the GET3 homodimer. Interacts with the chloride channel protein GEF1.

It localises to the cytoplasm. It is found in the endoplasmic reticulum. The protein resides in the golgi apparatus. In terms of biological role, ATPase required for the post-translational delivery of tail-anchored (TA) proteins to the endoplasmic reticulum. Recognizes and selectively binds the transmembrane domain of TA proteins in the cytosol. This complex then targets to the endoplasmic reticulum by membrane-bound receptors GET1 and GET2, where the tail-anchored protein is released for insertion. This process is regulated by ATP binding and hydrolysis. ATP binding drives the homodimer towards the closed dimer state, facilitating recognition of newly synthesized TA membrane proteins. ATP hydrolysis is required for insertion. Subsequently, the homodimer reverts towards the open dimer state, lowering its affinity for the GET1-GET2 receptor, and returning it to the cytosol to initiate a new round of targeting. Cooperates with the HDEL receptor ERD2 to mediate the ATP-dependent retrieval of resident ER proteins that contain a C-terminal H-D-E-L retention signal from the Golgi to the ER. Involved in low-level resistance to the oxyanions arsenite and arsenate, and in heat tolerance. In Candida albicans (strain SC5314 / ATCC MYA-2876) (Yeast), this protein is ATPase GET3.